The sequence spans 286 residues: Bifunctional protein FolD (286 aa).

166 to 168 (GAS) contacts NADP(+).

It belongs to the tetrahydrofolate dehydrogenase/cyclohydrolase family. As to quaternary structure, homodimer.

The catalysed reaction is (6R)-5,10-methylene-5,6,7,8-tetrahydrofolate + NADP(+) = (6R)-5,10-methenyltetrahydrofolate + NADPH. It carries out the reaction (6R)-5,10-methenyltetrahydrofolate + H2O = (6R)-10-formyltetrahydrofolate + H(+). Its pathway is one-carbon metabolism; tetrahydrofolate interconversion. Catalyzes the oxidation of 5,10-methylenetetrahydrofolate to 5,10-methenyltetrahydrofolate and then the hydrolysis of 5,10-methenyltetrahydrofolate to 10-formyltetrahydrofolate. The sequence is that of Bifunctional protein FolD from Idiomarina loihiensis (strain ATCC BAA-735 / DSM 15497 / L2-TR).